Here is a 454-residue protein sequence, read N- to C-terminus: tRNA modification GTPase MnmE (454 aa).

Residues Arg23, Glu80, and Lys120 each contribute to the (6S)-5-formyl-5,6,7,8-tetrahydrofolate site. The region spanning 216–377 (GMKVVIAGRP…LRNHLKQSMG (162 aa)) is the TrmE-type G domain. A K(+)-binding site is contributed by Asn226. Residues 226–231 (NAGKSS), 245–251 (TDIAGTT), 270–273 (DTAG), 335–338 (NKAD), and 358–360 (SAR) each bind GTP. Position 230 (Ser230) interacts with Mg(2+). Positions 245, 247, and 250 each coordinate K(+). Residue Thr251 coordinates Mg(2+). Lys454 contacts (6S)-5-formyl-5,6,7,8-tetrahydrofolate.

This sequence belongs to the TRAFAC class TrmE-Era-EngA-EngB-Septin-like GTPase superfamily. TrmE GTPase family. As to quaternary structure, homodimer. Heterotetramer of two MnmE and two MnmG subunits. K(+) serves as cofactor.

It localises to the cytoplasm. Its function is as follows. Exhibits a very high intrinsic GTPase hydrolysis rate. Involved in the addition of a carboxymethylaminomethyl (cmnm) group at the wobble position (U34) of certain tRNAs, forming tRNA-cmnm(5)s(2)U34. This is tRNA modification GTPase MnmE from Shigella sonnei (strain Ss046).